Here is a 1070-residue protein sequence, read N- to C-terminus: Phosphatidylinositol 4,5-bisphosphate 3-kinase catalytic subunit beta isoform (1070 aa).

The 90-residue stretch at 26-115 folds into the PI3K-ABD domain; the sequence is SDGSIPVDFL…LPVLKLVTRS (90 aa). The 92-residue stretch at 194–285 folds into the PI3K-RBD domain; it reads GGKLIVAVHF…RALPHFILVE (92 aa). Phosphoserine is present on S324. Positions 327-496 constitute a C2 PI3K-type domain; the sequence is WENNNPFQIV…NATALHVKFP (170 aa). Residues 410–418 carry the Nuclear localization signal motif; sequence KVKTKKSTK. The region spanning 524-701 is the PIK helical domain; sequence ANVSSRGGKK…GVILEAYCRG (178 aa). The 282-residue stretch at 772-1053 folds into the PI3K/PI4K catalytic domain; that stretch reads YVEKCKYMDS…KFDEALRESW (282 aa). The G-loop stretch occupies residues 778 to 784; it reads YMDSKMK. Residues 916–924 are catalytic loop; that stretch reads GIGDRHSDN. The tract at residues 935-961 is activation loop; sequence HIDFGHILGNFKSKFGIKRERVPFILT. S1070 is subject to Phosphoserine; by autocatalysis.

This sequence belongs to the PI3/PI4-kinase family. In terms of assembly, heterodimer of a catalytic subunit PIK3CB and a p85 regulatory subunit (PIK3R1, PIK3R2 or PIK3R3). Interaction with PIK3R2 is required for nuclear localization and nuclear export. Part of a complex with PIK3R1 and PTEN. Binding to PTEN may antagonize the lipid kinase activity under normal growth conditions. Part of a complex involved in autophagosome formation composed of PIK3C3 and PIK3R4. Interacts with BECN1, ATG14 and RAB5A. In terms of processing, autophosphorylation at Ser-1070 negatively regulates the phosphatidylinositol-4,5-bisphosphate 3-kinase activity. Expressed ubiquitously.

It is found in the cytoplasm. It localises to the nucleus. The enzyme catalyses a 1,2-diacyl-sn-glycero-3-phospho-(1D-myo-inositol-4,5-bisphosphate) + ATP = a 1,2-diacyl-sn-glycero-3-phospho-(1D-myo-inositol-3,4,5-trisphosphate) + ADP + H(+). The catalysed reaction is 1-octadecanoyl-2-(5Z,8Z,11Z,14Z)-eicosatetraenoyl-sn-glycero-3-phospho-1D-myo-inositol 4,5-bisphosphate + ATP = 1-octadecanoyl-2-(5Z,8Z,11Z,14Z-eicosatetraenoyl)-sn-glycero-3-phospho-(1D-myo-inositol 3,4,5-triphosphate) + ADP + H(+). It carries out the reaction L-seryl-[protein] + ATP = O-phospho-L-seryl-[protein] + ADP + H(+). The protein operates within phospholipid metabolism; phosphatidylinositol phosphate biosynthesis. Its function is as follows. Phosphoinositide-3-kinase (PI3K) phosphorylates phosphatidylinositol derivatives at position 3 of the inositol ring to produce 3-phosphoinositides. Uses ATP and PtdIns(4,5)P2 (phosphatidylinositol 4,5-bisphosphate) to generate phosphatidylinositol 3,4,5-trisphosphate (PIP3). PIP3 plays a key role by recruiting PH domain-containing proteins to the membrane, including AKT1 and PDPK1, activating signaling cascades involved in cell growth, survival, proliferation, motility and morphology. Involved in the activation of AKT1 upon stimulation by G-protein coupled receptors (GPCRs) ligands such as CXCL12, sphingosine 1-phosphate, and lysophosphatidic acid. May also act downstream receptor tyrosine kinases. Required in different signaling pathways for stable platelet adhesion and aggregation. Plays a role in platelet activation signaling triggered by GPCRs, alpha-IIb/beta-3 integrins (ITGA2B/ ITGB3) and ITAM (immunoreceptor tyrosine-based activation motif)-bearing receptors such as GP6. Regulates the strength of adhesion of ITGA2B/ ITGB3 activated receptors necessary for the cellular transmission of contractile forces. Required for platelet aggregation induced by F2 (thrombin) and thromboxane A2 (TXA2). Has a role in cell survival. May have a role in cell migration. Involved in the early stage of autophagosome formation. Modulates the intracellular level of PtdIns3P (phosphatidylinositol 3-phosphate) and activates PIK3C3 kinase activity. May act as a scaffold, independently of its lipid kinase activity to positively regulate autophagy. May have a role in insulin signaling as scaffolding protein in which the lipid kinase activity is not required. May have a kinase-independent function in regulating cell proliferation and in clathrin-mediated endocytosis. Mediator of oncogenic signal in cell lines lacking PTEN. The lipid kinase activity is necessary for its role in oncogenic transformation. Required for the growth of ERBB2 and RAS driven tumors. Also has a protein kinase activity showing autophosphorylation. This is Phosphatidylinositol 4,5-bisphosphate 3-kinase catalytic subunit beta isoform (PIK3CB) from Homo sapiens (Human).